The following is a 147-amino-acid chain: Deoxyuridine 5'-triphosphate nucleotidohydrolase (147 aa).

Substrate-binding positions include 67–69 (RSG), N80, and 84–86 (TID).

The protein belongs to the dUTPase family. Mg(2+) serves as cofactor.

The catalysed reaction is dUTP + H2O = dUMP + diphosphate + H(+). The protein operates within pyrimidine metabolism; dUMP biosynthesis; dUMP from dCTP (dUTP route): step 2/2. Its function is as follows. This enzyme is involved in nucleotide metabolism: it produces dUMP, the immediate precursor of thymidine nucleotides and it decreases the intracellular concentration of dUTP so that uracil cannot be incorporated into DNA. In Anaeromyxobacter dehalogenans (strain 2CP-C), this protein is Deoxyuridine 5'-triphosphate nucleotidohydrolase.